The sequence spans 220 residues: Large ribosomal subunit protein bL9 (220 aa).

Low complexity predominate over residues 167 to 184 (AAAEVEQAEDVAAAEQQD). The segment at 167–220 (AAAEVEQAEDVAAAEQQDSSPVDDHADDADGVADGEGRDEGAGDASDEEEMPST) is disordered. Residues 211 to 220 (ASDEEEMPST) show a composition bias toward acidic residues.

The protein belongs to the bacterial ribosomal protein bL9 family.

Binds to the 23S rRNA. The sequence is that of Large ribosomal subunit protein bL9 from Anaplasma marginale (strain Florida).